Reading from the N-terminus, the 556-residue chain is 2-succinyl-5-enolpyruvyl-6-hydroxy-3-cyclohexene-1-carboxylate synthase (556 aa).

The protein belongs to the TPP enzyme family. MenD subfamily. Homodimer. The cofactor is Mg(2+). Mn(2+) serves as cofactor. Thiamine diphosphate is required as a cofactor.

It catalyses the reaction isochorismate + 2-oxoglutarate + H(+) = 5-enolpyruvoyl-6-hydroxy-2-succinyl-cyclohex-3-ene-1-carboxylate + CO2. The protein operates within quinol/quinone metabolism; 1,4-dihydroxy-2-naphthoate biosynthesis; 1,4-dihydroxy-2-naphthoate from chorismate: step 2/7. It participates in quinol/quinone metabolism; menaquinone biosynthesis. In terms of biological role, catalyzes the thiamine diphosphate-dependent decarboxylation of 2-oxoglutarate and the subsequent addition of the resulting succinic semialdehyde-thiamine pyrophosphate anion to isochorismate to yield 2-succinyl-5-enolpyruvyl-6-hydroxy-3-cyclohexene-1-carboxylate (SEPHCHC). The sequence is that of 2-succinyl-5-enolpyruvyl-6-hydroxy-3-cyclohexene-1-carboxylate synthase from Citrobacter koseri (strain ATCC BAA-895 / CDC 4225-83 / SGSC4696).